A 719-amino-acid chain; its full sequence is MASSSGRVTIQLVDEEAGVGAGRLQLFRGQSYEAIRAACLDSGILFRDPYFPAGPDALGYDQLGPDSEKAKGVKWMRPHEFCAEPKFICEDMSRTDVCQGSLGNCWFLAAAASLTLYPRLLRRVVPPGQDFQHGYAGVFHFQLWQFGRWMDVVVDDRLPVREGKLMFVRSEQRNEFWAPLLEKAYAKLHGSYEVMRGGHMNEAFVDFTGGVGEVLYLRQNSMGLFSALRHALAKESLVGATALSDRGEYRTEEGLVKGHAYSITGTHKVFLGFTKVRLLRLRNPWGCVEWTGAWSDSCPRWDTLPTECRDALLVKKEDGEFWMELRDFLLHFDTVQICSLSPEVLGPSPEGGGWHVHTFQGRWVRGFNSGGSQPNAETFWTNPQFRLTLLEPDEEDDEDEEGPWGGWGAAGARGPARGGRTPKCTVLLSLIQRNRRRLRAKGLTYLTVGFHVFQIPEELLGLWDSPRSHALLPRLLRADRSPLSARRDVTRRCCLRPGHYLVVPSTAHAGDEADFTLRVFSERRHTAVEIDDVISADLQSLQGPYLPLELGLEQLFQELAGEEEELNASQLQALLSIALEPARAHTSTPREIGLRTCEQLLQCFGHGQSLALHHFQQLWGYLLEWQAIFNKFDEDTSGTMNSYELRLALNAAGFHLNNQLTQTLTSRYRDSRLRVDFERFVSCVAHLTCIFCHCSQHLDGGEGVICLTHRQWMEVATFS.

The Calpain catalytic domain maps to 45-341 (LFRDPYFPAG…FDTVQICSLS (297 aa)). Residues C105, H259, and N283 contribute to the active site. The segment at 342–540 (PEVLGPSPEG…DDVISADLQS (199 aa)) is domain III. Residues 393–402 (DEEDDEDEEG) show a composition bias toward acidic residues. Residues 393–418 (DEEDDEDEEGPWGGWGAAGARGPARG) form a disordered region. A domain IV region spans residues 541–719 (LQGPYLPLEL…RQWMEVATFS (179 aa)). The 36-residue stretch at 620–655 (GYLLEWQAIFNKFDEDTSGTMNSYELRLALNAAGFH) folds into the EF-hand domain. Positions 633, 635, 637, 639, and 644 each coordinate Ca(2+).

It belongs to the peptidase C2 family.

Its function is as follows. Calcium-regulated non-lysosomal thiol-protease. The polypeptide is Calpain-12 (CAPN12) (Homo sapiens (Human)).